The primary structure comprises 390 residues: uncharacterized protein (390 aa).

Belongs to the arsA ATPase family.

This is an uncharacterized protein from Streptomyces coelicolor (strain ATCC BAA-471 / A3(2) / M145).